The sequence spans 74 residues: Exodeoxyribonuclease 7 small subunit (74 aa).

It belongs to the XseB family. Heterooligomer composed of large and small subunits.

It localises to the cytoplasm. The enzyme catalyses Exonucleolytic cleavage in either 5'- to 3'- or 3'- to 5'-direction to yield nucleoside 5'-phosphates.. Functionally, bidirectionally degrades single-stranded DNA into large acid-insoluble oligonucleotides, which are then degraded further into small acid-soluble oligonucleotides. This chain is Exodeoxyribonuclease 7 small subunit, found in Neisseria meningitidis serogroup C / serotype 2a (strain ATCC 700532 / DSM 15464 / FAM18).